The chain runs to 329 residues: Synaptonemal complex central element protein 1 (329 aa).

Residues 1–29 (MATRPQPLGMEPEGSADLLHGPEGARGQY) are disordered. Coiled-coil stretches lie at residues 54–167 (RIEV…LETL) and 194–294 (KEQL…ILAH). The disordered stretch occupies residues 291–329 (ILAHSTQNEEDSSWRMASPKPVEVHEETAQDQERPSSRT). A compositionally biased stretch (basic and acidic residues) spans 312–329 (VEVHEETAQDQERPSSRT).

It belongs to the SYCE family. In terms of assembly, homodimer. Found in a complex with SYCP1 and SYCE2. Interacts with SYCP1, SYCE2 and SYCE3. Interacts with SIX6OS1. Meiotic cells (at protein level). Expressed in the ovary and testis.

It localises to the nucleus. It is found in the chromosome. In terms of biological role, major component of the transverse central element of synaptonemal complexes (SCS), formed between homologous chromosomes during meiotic prophase. Requires SYCP1 in order to be incorporated into the central element. May have a role in the synaptonemal complex assembly, stabilization and recombination. The chain is Synaptonemal complex central element protein 1 (Syce1) from Mus musculus (Mouse).